A 247-amino-acid polypeptide reads, in one-letter code: UPF0259 membrane protein BUAP5A_271 (247 aa).

Helical transmembrane passes span 20–40 (IGAIFFISIFATFMNILIDMF), 85–105 (IMESLISKTTLLGSIIILISV), 114–134 (IVSSIRTFFLFFPSLFILNFL), 137–157 (FIIQIGFMLLIIPGILLSIIL), 188–208 (IIGPGVLFWMCGKFILTMLLA), and 218–238 (LFLISNISMNILFSILIIYLF).

The protein belongs to the UPF0259 family.

The protein localises to the cell membrane. This is UPF0259 membrane protein BUAP5A_271 from Buchnera aphidicola subsp. Acyrthosiphon pisum (strain 5A).